A 699-amino-acid chain; its full sequence is Elongation factor G (699 aa).

One can recognise a tr-type G domain in the interval 8-283 (EHIRNIGICA…AVVDFLPSPI (276 aa)). GTP contacts are provided by residues 17 to 24 (AHIDAGKT), 81 to 85 (DTPGH), and 135 to 138 (NKMD).

It belongs to the TRAFAC class translation factor GTPase superfamily. Classic translation factor GTPase family. EF-G/EF-2 subfamily.

It localises to the cytoplasm. In terms of biological role, catalyzes the GTP-dependent ribosomal translocation step during translation elongation. During this step, the ribosome changes from the pre-translocational (PRE) to the post-translocational (POST) state as the newly formed A-site-bound peptidyl-tRNA and P-site-bound deacylated tRNA move to the P and E sites, respectively. Catalyzes the coordinated movement of the two tRNA molecules, the mRNA and conformational changes in the ribosome. This is Elongation factor G from Rickettsia parkeri.